The following is a 48-amino-acid chain: M-oxotoxin-Ot1b (48 aa).

It localises to the secreted. Its subcellular location is the target cell membrane. In terms of biological role, disrupts cell membranes, particularly those rich in phosphocholine, through formation of pores. Has antimicrobial activity, hemolytic activity and insecticidal activity. This is M-oxotoxin-Ot1b from Oxyopes takobius (Lynx spider).